Reading from the N-terminus, the 452-residue chain is Bifunctional protein GlmU (452 aa).

Positions 1 to 224 (MNIVILAAGM…EWETHGVNSK (224 aa)) are pyrophosphorylase. UDP-N-acetyl-alpha-D-glucosamine-binding positions include 6-9 (LAAG), Lys-20, Gln-71, 76-77 (GT), 98-100 (YGD), Gly-135, Glu-149, Asn-164, and Asn-222. Residue Asp-100 participates in Mg(2+) binding. Asn-222 is a Mg(2+) binding site. The linker stretch occupies residues 225–245 (VQLAELERIHQRNIAHALLEQ). The N-acetyltransferase stretch occupies residues 246–452 (GVTLADPARI…NWQRPVKIKK (207 aa)). UDP-N-acetyl-alpha-D-glucosamine contacts are provided by Arg-328 and Lys-346. His-358 serves as the catalytic Proton acceptor. 2 residues coordinate UDP-N-acetyl-alpha-D-glucosamine: Tyr-361 and Asn-372. Acetyl-CoA is bound by residues Ala-375, 381–382 (NY), Ser-400, Ala-418, and Arg-435.

The protein in the N-terminal section; belongs to the N-acetylglucosamine-1-phosphate uridyltransferase family. It in the C-terminal section; belongs to the transferase hexapeptide repeat family. As to quaternary structure, homotrimer. The cofactor is Mg(2+).

The protein localises to the cytoplasm. It catalyses the reaction alpha-D-glucosamine 1-phosphate + acetyl-CoA = N-acetyl-alpha-D-glucosamine 1-phosphate + CoA + H(+). The enzyme catalyses N-acetyl-alpha-D-glucosamine 1-phosphate + UTP + H(+) = UDP-N-acetyl-alpha-D-glucosamine + diphosphate. Its pathway is nucleotide-sugar biosynthesis; UDP-N-acetyl-alpha-D-glucosamine biosynthesis; N-acetyl-alpha-D-glucosamine 1-phosphate from alpha-D-glucosamine 6-phosphate (route II): step 2/2. It functions in the pathway nucleotide-sugar biosynthesis; UDP-N-acetyl-alpha-D-glucosamine biosynthesis; UDP-N-acetyl-alpha-D-glucosamine from N-acetyl-alpha-D-glucosamine 1-phosphate: step 1/1. It participates in bacterial outer membrane biogenesis; LPS lipid A biosynthesis. Functionally, catalyzes the last two sequential reactions in the de novo biosynthetic pathway for UDP-N-acetylglucosamine (UDP-GlcNAc). The C-terminal domain catalyzes the transfer of acetyl group from acetyl coenzyme A to glucosamine-1-phosphate (GlcN-1-P) to produce N-acetylglucosamine-1-phosphate (GlcNAc-1-P), which is converted into UDP-GlcNAc by the transfer of uridine 5-monophosphate (from uridine 5-triphosphate), a reaction catalyzed by the N-terminal domain. The sequence is that of Bifunctional protein GlmU from Janthinobacterium sp. (strain Marseille) (Minibacterium massiliensis).